The chain runs to 92 residues: Costars family protein ST45-2 (92 aa).

N-acetylmethionine is present on methionine 1.

Belongs to the costars family.

The polypeptide is Costars family protein ST45-2 (Eutrema halophilum (Salt cress)).